The sequence spans 226 residues: N-(5'-phosphoribosyl)anthranilate isomerase (226 aa).

This sequence belongs to the TrpF family.

It catalyses the reaction N-(5-phospho-beta-D-ribosyl)anthranilate = 1-(2-carboxyphenylamino)-1-deoxy-D-ribulose 5-phosphate. Its pathway is amino-acid biosynthesis; L-tryptophan biosynthesis; L-tryptophan from chorismate: step 3/5. This chain is N-(5'-phosphoribosyl)anthranilate isomerase, found in Synechococcus sp. (strain JA-3-3Ab) (Cyanobacteria bacterium Yellowstone A-Prime).